The sequence spans 151 residues: Large ribosomal subunit protein uL15 (151 aa).

The segment at G37–Q57 is disordered.

The protein belongs to the universal ribosomal protein uL15 family. In terms of assembly, part of the 50S ribosomal subunit.

Its function is as follows. Binds to the 23S rRNA. This is Large ribosomal subunit protein uL15 from Prochlorococcus marinus (strain MIT 9313).